The sequence spans 282 residues: uncharacterized protein (282 aa).

Positions 5-140 constitute an N-acetyltransferase domain; the sequence is DELIKLHEEH…SFQPYTKKLD (136 aa).

Belongs to the acetyltransferase family.

This is an uncharacterized protein from Bacillus subtilis (strain 168).